A 703-amino-acid chain; its full sequence is Elongation factor G 2 (703 aa).

In terms of domain architecture, tr-type G spans 8–291 (ELYRNIGIVA…AVIDYLPAPS (284 aa)). GTP is bound by residues 17–24 (AHVDAGKT), 89–93 (DTPGH), and 143–146 (NKMD).

The protein belongs to the TRAFAC class translation factor GTPase superfamily. Classic translation factor GTPase family. EF-G/EF-2 subfamily.

The protein localises to the cytoplasm. In terms of biological role, catalyzes the GTP-dependent ribosomal translocation step during translation elongation. During this step, the ribosome changes from the pre-translocational (PRE) to the post-translocational (POST) state as the newly formed A-site-bound peptidyl-tRNA and P-site-bound deacylated tRNA move to the P and E sites, respectively. Catalyzes the coordinated movement of the two tRNA molecules, the mRNA and conformational changes in the ribosome. This chain is Elongation factor G 2 (fusB), found in Pseudomonas putida (strain ATCC 47054 / DSM 6125 / CFBP 8728 / NCIMB 11950 / KT2440).